Reading from the N-terminus, the 310-residue chain is Ribosomal RNA small subunit methyltransferase H (310 aa).

S-adenosyl-L-methionine is bound by residues 32-34 (AGH), D51, F84, D102, and Q109.

It belongs to the methyltransferase superfamily. RsmH family.

The protein localises to the cytoplasm. It carries out the reaction cytidine(1402) in 16S rRNA + S-adenosyl-L-methionine = N(4)-methylcytidine(1402) in 16S rRNA + S-adenosyl-L-homocysteine + H(+). Functionally, specifically methylates the N4 position of cytidine in position 1402 (C1402) of 16S rRNA. The chain is Ribosomal RNA small subunit methyltransferase H from Campylobacter hominis (strain ATCC BAA-381 / DSM 21671 / CCUG 45161 / LMG 19568 / NCTC 13146 / CH001A).